The chain runs to 109 residues: Encapsulin nanocompartment cargo protein EncD (109 aa).

Glu47 serves as a coordination point for Fe cation. The disordered stretch occupies residues Ala61–Ala94. The segment covering Ala66–Gly85 has biased composition (low complexity). A probable targeting peptide region spans residues Leu100–Arg106.

It localises to the encapsulin nanocompartment. Cargo protein of a type 1 encapsulin nanocompartment. May help nucleate Fe atoms in the interior of the encapsulin nanocompartment. Present in about 47 copies/encapsulin nanocompartment. The protein is Encapsulin nanocompartment cargo protein EncD of Myxococcus xanthus (strain DK1622).